A 273-amino-acid chain; its full sequence is Undecaprenyl-diphosphatase (273 aa).

A run of 7 helical transmembrane segments spans residues 6–26, 45–65, 90–110, 116–136, 190–210, 222–242, and 252–272; these read SLLIAAILGVVEGLTEFLPVS, AKTFEVVIQLGSILAVVVMFW, LTLIHILLGMIPAVVLGLVFH, LFNPINVMYTLVVGGLLLIAA, YAASEFSFLLAVPMMMGATVL, ADIPMFAVGFVTAFVVALIAI, and ISFIPFAIYRFVVAAAVYVVF.

The protein belongs to the UppP family.

The protein resides in the cell inner membrane. The enzyme catalyses di-trans,octa-cis-undecaprenyl diphosphate + H2O = di-trans,octa-cis-undecaprenyl phosphate + phosphate + H(+). Catalyzes the dephosphorylation of undecaprenyl diphosphate (UPP). Confers resistance to bacitracin. In Salmonella paratyphi C (strain RKS4594), this protein is Undecaprenyl-diphosphatase.